The following is a 439-amino-acid chain: Ribosomal protein uS12 methylthiotransferase RimO (439 aa).

Residues 3 to 113 (HKVGFVSLGC…VVNAVHQHLP (111 aa)) enclose the MTTase N-terminal domain. 6 residues coordinate [4Fe-4S] cluster: C12, C48, C77, C144, C148, and C151. The region spanning 130-367 (LTPRHYAYLK…MQVQAEISRN (238 aa)) is the Radical SAM core domain. Positions 370–436 (KNKIGSTQTV…DYDLYGDLEY (67 aa)) constitute a TRAM domain.

This sequence belongs to the methylthiotransferase family. RimO subfamily. [4Fe-4S] cluster serves as cofactor.

The protein resides in the cytoplasm. The catalysed reaction is L-aspartate(89)-[ribosomal protein uS12]-hydrogen + (sulfur carrier)-SH + AH2 + 2 S-adenosyl-L-methionine = 3-methylsulfanyl-L-aspartate(89)-[ribosomal protein uS12]-hydrogen + (sulfur carrier)-H + 5'-deoxyadenosine + L-methionine + A + S-adenosyl-L-homocysteine + 2 H(+). Functionally, catalyzes the methylthiolation of an aspartic acid residue of ribosomal protein uS12. The chain is Ribosomal protein uS12 methylthiotransferase RimO from Legionella pneumophila (strain Paris).